The sequence spans 78 residues: Probable [Fe-S]-dependent transcriptional repressor (78 aa).

Iron-sulfur cluster is bound by residues Cys-56, Cys-61, Cys-64, and Cys-70.

Belongs to the FeoC family.

Functionally, may function as a transcriptional regulator that controls feoABC expression. This Escherichia coli O127:H6 (strain E2348/69 / EPEC) protein is Probable [Fe-S]-dependent transcriptional repressor.